A 431-amino-acid polypeptide reads, in one-letter code: Enolase (431 aa).

Glutamine 162 serves as a coordination point for (2R)-2-phosphoglycerate. Glutamate 204 (proton donor) is an active-site residue. Positions 241, 284, and 311 each coordinate Mg(2+). 4 residues coordinate (2R)-2-phosphoglycerate: lysine 336, arginine 365, serine 366, and lysine 387. The active-site Proton acceptor is the lysine 336.

It belongs to the enolase family. Requires Mg(2+) as cofactor.

It localises to the cytoplasm. Its subcellular location is the secreted. The protein resides in the cell surface. It carries out the reaction (2R)-2-phosphoglycerate = phosphoenolpyruvate + H2O. The protein operates within carbohydrate degradation; glycolysis; pyruvate from D-glyceraldehyde 3-phosphate: step 4/5. Its function is as follows. Catalyzes the reversible conversion of 2-phosphoglycerate (2-PG) into phosphoenolpyruvate (PEP). It is essential for the degradation of carbohydrates via glycolysis. The polypeptide is Enolase (Sorangium cellulosum (strain So ce56) (Polyangium cellulosum (strain So ce56))).